Consider the following 921-residue polypeptide: Isoleucine--tRNA ligase 1 (921 aa).

The 'HIGH' region motif lies at 57-67 (PYANGDIHMGH). Glutamate 552 contributes to the L-isoleucyl-5'-AMP binding site. The 'KMSKS' region motif lies at 593–597 (KMSKS). Lysine 596 contacts ATP. The Zn(2+) site is built by cysteine 888, cysteine 891, cysteine 908, and cysteine 911.

It belongs to the class-I aminoacyl-tRNA synthetase family. IleS type 1 subfamily. Monomer. It depends on Zn(2+) as a cofactor.

The protein localises to the cytoplasm. The enzyme catalyses tRNA(Ile) + L-isoleucine + ATP = L-isoleucyl-tRNA(Ile) + AMP + diphosphate. Catalyzes the attachment of isoleucine to tRNA(Ile). As IleRS can inadvertently accommodate and process structurally similar amino acids such as valine, to avoid such errors it has two additional distinct tRNA(Ile)-dependent editing activities. One activity is designated as 'pretransfer' editing and involves the hydrolysis of activated Val-AMP. The other activity is designated 'posttransfer' editing and involves deacylation of mischarged Val-tRNA(Ile). The protein is Isoleucine--tRNA ligase 1 of Bacillus cereus (strain ZK / E33L).